A 246-amino-acid chain; its full sequence is tRNA (guanine-N(7)-)-methyltransferase (246 aa).

The segment at 1–26 (MSDSSSSSENAPATPESPGRPPRGIK) is disordered. 4 residues coordinate S-adenosyl-L-methionine: Glu-74, Glu-99, Asp-126, and Asp-149. The active site involves Asp-149. Residues Lys-153, Asp-185, and 224-227 (TKFE) contribute to the substrate site.

Belongs to the class I-like SAM-binding methyltransferase superfamily. TrmB family.

The catalysed reaction is guanosine(46) in tRNA + S-adenosyl-L-methionine = N(7)-methylguanosine(46) in tRNA + S-adenosyl-L-homocysteine. It functions in the pathway tRNA modification; N(7)-methylguanine-tRNA biosynthesis. In terms of biological role, catalyzes the formation of N(7)-methylguanine at position 46 (m7G46) in tRNA. This Chromohalobacter salexigens (strain ATCC BAA-138 / DSM 3043 / CIP 106854 / NCIMB 13768 / 1H11) protein is tRNA (guanine-N(7)-)-methyltransferase.